Reading from the N-terminus, the 388-residue chain is Chorismate synthase (388 aa).

2 residues coordinate NADP(+): R39 and R45. FMN-binding positions include R130–S132, N251–A252, G296, K311–T315, and R337.

It belongs to the chorismate synthase family. In terms of assembly, homotetramer. The cofactor is FMNH2.

The enzyme catalyses 5-O-(1-carboxyvinyl)-3-phosphoshikimate = chorismate + phosphate. It participates in metabolic intermediate biosynthesis; chorismate biosynthesis; chorismate from D-erythrose 4-phosphate and phosphoenolpyruvate: step 7/7. In terms of biological role, catalyzes the anti-1,4-elimination of the C-3 phosphate and the C-6 proR hydrogen from 5-enolpyruvylshikimate-3-phosphate (EPSP) to yield chorismate, which is the branch point compound that serves as the starting substrate for the three terminal pathways of aromatic amino acid biosynthesis. This reaction introduces a second double bond into the aromatic ring system. This chain is Chorismate synthase, found in Streptococcus pyogenes serotype M6 (strain ATCC BAA-946 / MGAS10394).